Here is a 217-residue protein sequence, read N- to C-terminus: Deoxyribose-phosphate aldolase (217 aa).

The Proton donor/acceptor role is filled by Asp-95. The Schiff-base intermediate with acetaldehyde role is filled by Lys-156. Lys-184 functions as the Proton donor/acceptor in the catalytic mechanism.

It belongs to the DeoC/FbaB aldolase family. DeoC type 1 subfamily.

It localises to the cytoplasm. The enzyme catalyses 2-deoxy-D-ribose 5-phosphate = D-glyceraldehyde 3-phosphate + acetaldehyde. It participates in carbohydrate degradation; 2-deoxy-D-ribose 1-phosphate degradation; D-glyceraldehyde 3-phosphate and acetaldehyde from 2-deoxy-alpha-D-ribose 1-phosphate: step 2/2. Its function is as follows. Catalyzes a reversible aldol reaction between acetaldehyde and D-glyceraldehyde 3-phosphate to generate 2-deoxy-D-ribose 5-phosphate. The chain is Deoxyribose-phosphate aldolase from Thermosynechococcus vestitus (strain NIES-2133 / IAM M-273 / BP-1).